A 212-amino-acid chain; its full sequence is Ribosomal RNA large subunit methyltransferase E (212 aa).

Residues Gly57, Trp59, Asp77, Asp93, and Asp122 each coordinate S-adenosyl-L-methionine. The active-site Proton acceptor is Lys162.

This sequence belongs to the class I-like SAM-binding methyltransferase superfamily. RNA methyltransferase RlmE family.

It is found in the cytoplasm. The catalysed reaction is uridine(2552) in 23S rRNA + S-adenosyl-L-methionine = 2'-O-methyluridine(2552) in 23S rRNA + S-adenosyl-L-homocysteine + H(+). Functionally, specifically methylates the uridine in position 2552 of 23S rRNA at the 2'-O position of the ribose in the fully assembled 50S ribosomal subunit. This is Ribosomal RNA large subunit methyltransferase E from Coxiella burnetii (strain CbuK_Q154) (Coxiella burnetii (strain Q154)).